We begin with the raw amino-acid sequence, 113 residues long: Large ribosomal subunit protein uL22 (113 aa).

The protein belongs to the universal ribosomal protein uL22 family. As to quaternary structure, part of the 50S ribosomal subunit.

In terms of biological role, this protein binds specifically to 23S rRNA; its binding is stimulated by other ribosomal proteins, e.g. L4, L17, and L20. It is important during the early stages of 50S assembly. It makes multiple contacts with different domains of the 23S rRNA in the assembled 50S subunit and ribosome. Its function is as follows. The globular domain of the protein is located near the polypeptide exit tunnel on the outside of the subunit, while an extended beta-hairpin is found that lines the wall of the exit tunnel in the center of the 70S ribosome. The sequence is that of Large ribosomal subunit protein uL22 from Oceanobacillus iheyensis (strain DSM 14371 / CIP 107618 / JCM 11309 / KCTC 3954 / HTE831).